We begin with the raw amino-acid sequence, 177 residues long: Hypoxanthine phosphoribosyltransferase (177 aa).

Residues R43 and G44 each coordinate diphosphate. E99 lines the GMP pocket. Residue E99 coordinates IMP. Mg(2+) contacts are provided by E99 and D100. D103 serves as the catalytic Proton acceptor. Residues 103–108 (DSGKTL), K131, and D159 each bind GMP. IMP contacts are provided by residues 103–108 (DSGKTL) and K131. R165 lines the diphosphate pocket.

It belongs to the purine/pyrimidine phosphoribosyltransferase family. In terms of assembly, homotetramer. Mg(2+) is required as a cofactor.

The protein resides in the cytoplasm. It catalyses the reaction IMP + diphosphate = hypoxanthine + 5-phospho-alpha-D-ribose 1-diphosphate. It carries out the reaction GMP + diphosphate = guanine + 5-phospho-alpha-D-ribose 1-diphosphate. Its pathway is purine metabolism; IMP biosynthesis via salvage pathway; IMP from hypoxanthine: step 1/1. Purine salvage pathway enzyme which catalyzes the transfer of the ribosyl-5-phosphate group from 5-phospho-alpha-D-ribose 1-diphosphate (PRPP) to the N9 position of hypoxanthine to yield IMP (inosine 5'-monophosphate). To a lesser extent, can also act on guanine leading to GMP, but shows a highly less efficient activity with xanthine. This Buchnera aphidicola subsp. Schizaphis graminum (strain Sg) protein is Hypoxanthine phosphoribosyltransferase (hpt).